The sequence spans 196 residues: DnaA initiator-associating protein DiaA (196 aa).

In terms of domain architecture, SIS spans Leu-34–Asp-196.

It belongs to the SIS family. DiaA subfamily. As to quaternary structure, homotetramer; dimer of dimers.

In terms of biological role, required for the timely initiation of chromosomal replication via direct interactions with the DnaA initiator protein. This chain is DnaA initiator-associating protein DiaA, found in Edwardsiella ictaluri (strain 93-146).